A 76-amino-acid chain; its full sequence is Beta-defensin 121 (76 aa).

Positions 1–15 (MKLLLLLLTVTLLLA) are cleaved as a signal peptide. 3 cysteine pairs are disulfide-bonded: Cys23/Cys50, Cys30/Cys44, and Cys34/Cys51.

It belongs to the beta-defensin family. As to expression, abundant expression in the male reproductive tract only.

Its subcellular location is the secreted. Functionally, has antibacterial activity. The polypeptide is Beta-defensin 121 (DEFB121) (Homo sapiens (Human)).